The sequence spans 454 residues: Pup--protein ligase (454 aa).

E9 is a Mg(2+) binding site. Residue R53 participates in ATP binding. Residue Y55 coordinates Mg(2+). D57 functions as the Proton acceptor in the catalytic mechanism. Residue E63 coordinates Mg(2+). The ATP site is built by T66 and W420.

It belongs to the Pup ligase/Pup deamidase family. Pup-conjugating enzyme subfamily.

The enzyme catalyses ATP + [prokaryotic ubiquitin-like protein]-L-glutamate + [protein]-L-lysine = ADP + phosphate + N(6)-([prokaryotic ubiquitin-like protein]-gamma-L-glutamyl)-[protein]-L-lysine.. It participates in protein degradation; proteasomal Pup-dependent pathway. The protein operates within protein modification; protein pupylation. Its function is as follows. Catalyzes the covalent attachment of the prokaryotic ubiquitin-like protein modifier Pup to the proteasomal substrate proteins, thereby targeting them for proteasomal degradation. This tagging system is termed pupylation. The ligation reaction involves the side-chain carboxylate of the C-terminal glutamate of Pup and the side-chain amino group of a substrate lysine. The sequence is that of Pup--protein ligase from Arthrobacter sp. (strain FB24).